The following is a 977-amino-acid chain: DNA-directed RNA polymerase 3B, chloroplastic (977 aa).

The transit peptide at 1 to 71 (MASTASYSPS…NNIQSQTTVC (71 aa)) directs the protein to the chloroplast. Active-site residues include Asp678, Lys753, and Asp910.

Belongs to the phage and mitochondrial RNA polymerase family.

It is found in the plastid. It localises to the chloroplast. The catalysed reaction is RNA(n) + a ribonucleoside 5'-triphosphate = RNA(n+1) + diphosphate. In terms of biological role, DNA-dependent RNA polymerase catalyzes the transcription of DNA into RNA using the four ribonucleoside triphosphates as substrates. This chain is DNA-directed RNA polymerase 3B, chloroplastic (RPOT3-TOM), found in Nicotiana tabacum (Common tobacco).